We begin with the raw amino-acid sequence, 436 residues long: Adenylosuccinate synthetase (436 aa).

GTP contacts are provided by residues 12-18 and 40-42; these read GDEGKGK and GHT. The Proton acceptor role is filled by D13. Mg(2+)-binding residues include D13 and G40. Residues 13–16, 38–41, T128, R142, Q223, T238, and R302 each bind IMP; these read DEGK and NAGH. H41 serves as the catalytic Proton donor. Residue 298 to 304 coordinates substrate; the sequence is TTTGRRR. GTP contacts are provided by residues R304, 330-332, and 412-414; these read KLD and SLG.

Belongs to the adenylosuccinate synthetase family. As to quaternary structure, homodimer. The cofactor is Mg(2+).

Its subcellular location is the cytoplasm. The catalysed reaction is IMP + L-aspartate + GTP = N(6)-(1,2-dicarboxyethyl)-AMP + GDP + phosphate + 2 H(+). It participates in purine metabolism; AMP biosynthesis via de novo pathway; AMP from IMP: step 1/2. Plays an important role in the de novo pathway of purine nucleotide biosynthesis. Catalyzes the first committed step in the biosynthesis of AMP from IMP. This is Adenylosuccinate synthetase from Prochlorococcus marinus (strain MIT 9301).